The chain runs to 247 residues: tRNA pseudouridine synthase A (247 aa).

The Nucleophile role is filled by aspartate 53. Tyrosine 111 serves as a coordination point for substrate.

The protein belongs to the tRNA pseudouridine synthase TruA family. In terms of assembly, homodimer.

The catalysed reaction is uridine(38/39/40) in tRNA = pseudouridine(38/39/40) in tRNA. Formation of pseudouridine at positions 38, 39 and 40 in the anticodon stem and loop of transfer RNAs. This is tRNA pseudouridine synthase A from Bacillus licheniformis (strain ATCC 14580 / DSM 13 / JCM 2505 / CCUG 7422 / NBRC 12200 / NCIMB 9375 / NCTC 10341 / NRRL NRS-1264 / Gibson 46).